The chain runs to 399 residues: Putative 8-amino-7-oxononanoate synthase (399 aa).

Arginine 23 is a binding site for substrate. Residue 110-111 coordinates pyridoxal 5'-phosphate; that stretch reads GY. Substrate is bound at residue histidine 135. Residues serine 183, 208–211, and 239–242 contribute to the pyridoxal 5'-phosphate site; these read DEAH and TLSK. At lysine 242 the chain carries N6-(pyridoxal phosphate)lysine. Threonine 364 contributes to the substrate binding site.

This sequence belongs to the class-II pyridoxal-phosphate-dependent aminotransferase family. BioF subfamily. As to quaternary structure, homodimer. Pyridoxal 5'-phosphate is required as a cofactor.

The catalysed reaction is 6-carboxyhexanoyl-[ACP] + L-alanine + H(+) = (8S)-8-amino-7-oxononanoate + holo-[ACP] + CO2. It participates in cofactor biosynthesis; biotin biosynthesis. Functionally, catalyzes the decarboxylative condensation of pimeloyl-[acyl-carrier protein] and L-alanine to produce 8-amino-7-oxononanoate (AON), [acyl-carrier protein], and carbon dioxide. The chain is Putative 8-amino-7-oxononanoate synthase (bioF) from Cyanothece sp. (strain PCC 7425 / ATCC 29141).